We begin with the raw amino-acid sequence, 688 residues long: Elongation factor G (688 aa).

The 275-residue stretch at 8-282 folds into the tr-type G domain; the sequence is INFRNFGIMA…AVVDFLPSPV (275 aa). Residues 17-24, 81-85, and 135-138 each bind GTP; these read AHIDAGKT, DTPGH, and NKMD.

Belongs to the TRAFAC class translation factor GTPase superfamily. Classic translation factor GTPase family. EF-G/EF-2 subfamily.

The protein localises to the cytoplasm. Functionally, catalyzes the GTP-dependent ribosomal translocation step during translation elongation. During this step, the ribosome changes from the pre-translocational (PRE) to the post-translocational (POST) state as the newly formed A-site-bound peptidyl-tRNA and P-site-bound deacylated tRNA move to the P and E sites, respectively. Catalyzes the coordinated movement of the two tRNA molecules, the mRNA and conformational changes in the ribosome. In Mycoplasma pneumoniae (strain ATCC 29342 / M129 / Subtype 1) (Mycoplasmoides pneumoniae), this protein is Elongation factor G (fusA).